A 356-amino-acid chain; its full sequence is MRVTDFSFELPESLIAHYPQPERSRCRLLSLDGPTGALTHGTFTDLLDKLNPGDLLVFNNTRVIPARLFGRKASGGKIEVLVERMLDDKRILAHIRASKAPKPGAELLLGDDESINATMTARHGALFEVEFNDARPVLEILNAIGHMPLPPYIDRPDEDADRELYQTVYSEKPGAVAAPTAGLHFDDPLLAALREKGIEMAFVTLHVGAGTFQPVRVETIEDHIMHSEYAEVPQEVVDAVLAAKARGNRIIAVGTTSVRSLESAAQAAKNDLIEPFFGDTQIFIYPGYQYKVIDALVTNFHLPESTLIMLVSAFAGYQHTMNAYKAAVEQNYRFFSYGDAMFITYNPQALNERVGK.

The protein belongs to the QueA family. As to quaternary structure, monomer.

It is found in the cytoplasm. The catalysed reaction is 7-aminomethyl-7-carbaguanosine(34) in tRNA + S-adenosyl-L-methionine = epoxyqueuosine(34) in tRNA + adenine + L-methionine + 2 H(+). It participates in tRNA modification; tRNA-queuosine biosynthesis. Transfers and isomerizes the ribose moiety from AdoMet to the 7-aminomethyl group of 7-deazaguanine (preQ1-tRNA) to give epoxyqueuosine (oQ-tRNA). The chain is S-adenosylmethionine:tRNA ribosyltransferase-isomerase from Citrobacter koseri (strain ATCC BAA-895 / CDC 4225-83 / SGSC4696).